The primary structure comprises 295 residues: Sulfotransferase 1 family member D1 (295 aa).

48-53 contributes to the 3'-phosphoadenylyl sulfate binding site; the sequence is KSGTTW. Substrate contacts are provided by residues Phe-81 and 106–108; that span reads KTH. His-108 serves as the catalytic Proton acceptor. Residues Arg-130 and Ser-138 each coordinate 3'-phosphoadenylyl sulfate. Phe-142 provides a ligand contact to substrate. 3'-phosphoadenylyl sulfate contacts are provided by residues Tyr-193, Ser-227, and 257 to 259; that span reads RKG.

Belongs to the sulfotransferase 1 family.

It is found in the cytoplasm. Sulfotransferase with broad substrate specificity that utilizes 3'-phospho-5'-adenylyl sulfate (PAPS) as sulfonate donor to catalyze the sulfate conjugation of catecholamines, such as dopamine, prostaglandins, leukotriene E4, drugs and xenobiotic compounds. Has sulfotransferase activity towards p-nitrophenol, 2-naphthylamine and minoxidil (in vitro). Sulfonation increases the water solubility of most compounds, and therefore their renal excretion, but it can also result in bioactivation to form active metabolites. The protein is Sulfotransferase 1 family member D1 (Sult1d1) of Rattus norvegicus (Rat).